The sequence spans 336 residues: Protease HtpX homolog (336 aa).

The next 2 helical transmembrane spans lie at 7–24 (AMLLAAMTALFMGVGFLI) and 29–48 (GMMIALLIAAGTNLFSYWNA). Position 130 (His130) interacts with Zn(2+). Glu131 is an active-site residue. His134 lines the Zn(2+) pocket. Helical transmembrane passes span 145 to 165 (IVATFAGAISMLGNFAFFLGG) and 171 to 191 (PFGFVGVLAAMIVAPFAAMIV). Glu200 is a binding site for Zn(2+). Residues 278-287 (QQMAGGTQAA) are compositionally biased toward low complexity. The interval 278 to 336 (QQMAGGTQAAPRPTPRQAGEQQPSGPWGQAPQAEQPAEPERPKANPWGRNPTGPKGRWS) is disordered.

The protein belongs to the peptidase M48B family. Zn(2+) serves as cofactor.

Its subcellular location is the cell inner membrane. This Mesorhizobium japonicum (strain LMG 29417 / CECT 9101 / MAFF 303099) (Mesorhizobium loti (strain MAFF 303099)) protein is Protease HtpX homolog.